The primary structure comprises 208 residues: Nitrate/nitrite response regulator protein homolog (208 aa).

One can recognise a Response regulatory domain in the interval 6 to 122 (KVLLIDDHPL…TLLEQIKRIA (117 aa)). Position 57 is a 4-aspartylphosphate (D57). The HTH luxR-type domain occupies 142–207 (EDNPLDSLTD…AATVLFFEQN (66 aa)). The H-T-H motif DNA-binding region spans 166-185 (NKQIAAQLFISEETVKVHIR).

Could activate the expression of a formate dehydrogenase operon and could repress the transcription of the fumarate reductase (frdABCD) operon. The polypeptide is Nitrate/nitrite response regulator protein homolog (narP) (Haemophilus influenzae (strain ATCC 51907 / DSM 11121 / KW20 / Rd)).